The following is a 627-amino-acid chain: (R)-linalool synthase 1, chloroplastic (627 aa).

The N-terminal 21 residues, 1 to 21, are a transit peptide targeting the chloroplast; it reads MAFVSIAPLASRCCVHKSFVS. Residues D378, D382, and E530 each contribute to the Mg(2+) site. The DDXXD motif signature appears at 378 to 382; it reads DDIYD.

It belongs to the terpene synthase family. Tpsd subfamily. Mg(2+) is required as a cofactor. Mn(2+) serves as cofactor.

The protein localises to the plastid. Its subcellular location is the chloroplast. It catalyses the reaction (2E)-geranyl diphosphate + H2O = (R)-linalool + diphosphate. The protein operates within terpene metabolism; oleoresin biosynthesis. Terpene synthase (TPS) involved in the biosynthesis of monoterpene natural products included in conifer oleoresin secretions and volatile emissions; these compounds contribute to biotic and abiotic stress defense against herbivores and pathogens. Catalyzes the conversion of (2E)-geranyl diphosphate (GPP) to (R)-linalool. The protein is (R)-linalool synthase 1, chloroplastic of Picea sitchensis (Sitka spruce).